We begin with the raw amino-acid sequence, 291 residues long: Nucleotide-binding protein PPA0813 (291 aa).

Residue 17 to 24 coordinates ATP; the sequence is GISGAGRR. Residue 66–69 coordinates GTP; sequence DVRS.

The protein belongs to the RapZ-like family.

Functionally, displays ATPase and GTPase activities. The sequence is that of Nucleotide-binding protein PPA0813 from Cutibacterium acnes (strain DSM 16379 / KPA171202) (Propionibacterium acnes).